The chain runs to 456 residues: MLTDREVISTLDMLRNEHLDVRTVTLGISLFDCASDNFDRFATRVQDKISRYAEHLVATCDEVGEKYGIPVVNKRISISPMAVVGAPFGPDDMVRAAQVLDKAACNAGVDFLGGFTALVEKGMTKGDRALIDALPEALATTGRVCSSVNVGSSRSGINMDAVALMGDTIVQIAGRTADRDGIGCAKLVVFTNIPQDVPFMAGAYLGTGEPDVVINVGVSGPGVVKKAIDRAMQSGDRSLGDIAEVIKRTAFKVTRVGEIIGREVAERLGVPFGVADLSLAPAPQVGDSVGEIFQSVGLASIGVPGSTAVLAMLNDAVKKGGAFASSHVGGLSGAFIPVSEDLNIAEAAATGRLTLEKLEAMTSVCSVGLDMVAIPGDTPAATIAAIIADEMAIGMINNKTTAVRIIPVPGKKAGDTVSFGGLLGESAIMPVPGSGGSEKFIRLGGRMPAPIHSLKN.

Belongs to the UPF0210 family. Homodimer.

The protein is UPF0210 protein Dde_3704 of Oleidesulfovibrio alaskensis (strain ATCC BAA-1058 / DSM 17464 / G20) (Desulfovibrio alaskensis).